The primary structure comprises 188 residues: Ribosome maturation factor RimM (188 aa).

In terms of domain architecture, PRC barrel spans 93–166; that stretch reads EDEYYDHQLI…RAVIDPPPGL (74 aa).

Belongs to the RimM family. Binds ribosomal protein uS19.

The protein resides in the cytoplasm. Its function is as follows. An accessory protein needed during the final step in the assembly of 30S ribosomal subunit, possibly for assembly of the head region. Essential for efficient processing of 16S rRNA. May be needed both before and after RbfA during the maturation of 16S rRNA. It has affinity for free ribosomal 30S subunits but not for 70S ribosomes. This Streptomyces coelicolor (strain ATCC BAA-471 / A3(2) / M145) protein is Ribosome maturation factor RimM.